Reading from the N-terminus, the 243-residue chain is CR(VI) reductase (243 aa).

The protein belongs to the flavin oxidoreductase frp family. Requires FMN as cofactor.

This Pseudomonas sp. (strain G-1) protein is CR(VI) reductase (chrR).